A 188-amino-acid polypeptide reads, in one-letter code: Elongation factor P (188 aa).

The protein belongs to the elongation factor P family.

It is found in the cytoplasm. It functions in the pathway protein biosynthesis; polypeptide chain elongation. Its function is as follows. Involved in peptide bond synthesis. Stimulates efficient translation and peptide-bond synthesis on native or reconstituted 70S ribosomes in vitro. Probably functions indirectly by altering the affinity of the ribosome for aminoacyl-tRNA, thus increasing their reactivity as acceptors for peptidyl transferase. This chain is Elongation factor P, found in Bacteroides thetaiotaomicron (strain ATCC 29148 / DSM 2079 / JCM 5827 / CCUG 10774 / NCTC 10582 / VPI-5482 / E50).